A 398-amino-acid chain; its full sequence is Tryptophan synthase beta chain (398 aa).

Residue Lys92 is modified to N6-(pyridoxal phosphate)lysine.

The protein belongs to the TrpB family. Tetramer of two alpha and two beta chains. The cofactor is pyridoxal 5'-phosphate.

It carries out the reaction (1S,2R)-1-C-(indol-3-yl)glycerol 3-phosphate + L-serine = D-glyceraldehyde 3-phosphate + L-tryptophan + H2O. Its pathway is amino-acid biosynthesis; L-tryptophan biosynthesis; L-tryptophan from chorismate: step 5/5. The beta subunit is responsible for the synthesis of L-tryptophan from indole and L-serine. This is Tryptophan synthase beta chain from Nitrosospira multiformis (strain ATCC 25196 / NCIMB 11849 / C 71).